The primary structure comprises 334 residues: Holliday junction branch migration complex subunit RuvB (334 aa).

The interval 1–182 is large ATPase domain (RuvB-L); that stretch reads MDERLVSSEL…FGVLSRLEYY (182 aa). Residues leucine 21, arginine 22, glycine 63, lysine 66, threonine 67, threonine 68, 129 to 131, arginine 172, tyrosine 182, and arginine 219 contribute to the ATP site; that span reads EDF. Mg(2+) is bound at residue threonine 67. The segment at 183–253 is small ATPAse domain (RuvB-S); it reads TRDELSEIVI…VAVDALERLQ (71 aa). A head domain (RuvB-H) region spans residues 256–334; the sequence is KLGLDHIDRK…HFKMEVPNHD (79 aa). The DNA site is built by arginine 311 and arginine 316.

The protein belongs to the RuvB family. Homohexamer. Forms an RuvA(8)-RuvB(12)-Holliday junction (HJ) complex. HJ DNA is sandwiched between 2 RuvA tetramers; dsDNA enters through RuvA and exits via RuvB. An RuvB hexamer assembles on each DNA strand where it exits the tetramer. Each RuvB hexamer is contacted by two RuvA subunits (via domain III) on 2 adjacent RuvB subunits; this complex drives branch migration. In the full resolvosome a probable DNA-RuvA(4)-RuvB(12)-RuvC(2) complex forms which resolves the HJ.

Its subcellular location is the cytoplasm. The enzyme catalyses ATP + H2O = ADP + phosphate + H(+). Its function is as follows. The RuvA-RuvB-RuvC complex processes Holliday junction (HJ) DNA during genetic recombination and DNA repair, while the RuvA-RuvB complex plays an important role in the rescue of blocked DNA replication forks via replication fork reversal (RFR). RuvA specifically binds to HJ cruciform DNA, conferring on it an open structure. The RuvB hexamer acts as an ATP-dependent pump, pulling dsDNA into and through the RuvAB complex. RuvB forms 2 homohexamers on either side of HJ DNA bound by 1 or 2 RuvA tetramers; 4 subunits per hexamer contact DNA at a time. Coordinated motions by a converter formed by DNA-disengaged RuvB subunits stimulates ATP hydrolysis and nucleotide exchange. Immobilization of the converter enables RuvB to convert the ATP-contained energy into a lever motion, pulling 2 nucleotides of DNA out of the RuvA tetramer per ATP hydrolyzed, thus driving DNA branch migration. The RuvB motors rotate together with the DNA substrate, which together with the progressing nucleotide cycle form the mechanistic basis for DNA recombination by continuous HJ branch migration. Branch migration allows RuvC to scan DNA until it finds its consensus sequence, where it cleaves and resolves cruciform DNA. The protein is Holliday junction branch migration complex subunit RuvB of Bacillus licheniformis (strain ATCC 14580 / DSM 13 / JCM 2505 / CCUG 7422 / NBRC 12200 / NCIMB 9375 / NCTC 10341 / NRRL NRS-1264 / Gibson 46).